Reading from the N-terminus, the 304-residue chain is Methionyl-tRNA formyltransferase (304 aa).

110–113 (SLLP) lines the (6S)-5,6,7,8-tetrahydrofolate pocket.

Belongs to the Fmt family.

The enzyme catalyses L-methionyl-tRNA(fMet) + (6R)-10-formyltetrahydrofolate = N-formyl-L-methionyl-tRNA(fMet) + (6S)-5,6,7,8-tetrahydrofolate + H(+). Functionally, attaches a formyl group to the free amino group of methionyl-tRNA(fMet). The formyl group appears to play a dual role in the initiator identity of N-formylmethionyl-tRNA by promoting its recognition by IF2 and preventing the misappropriation of this tRNA by the elongation apparatus. The protein is Methionyl-tRNA formyltransferase of Gluconobacter oxydans (strain 621H) (Gluconobacter suboxydans).